The sequence spans 84 residues: Alpha-mammal toxin Ts2 (84 aa).

The N-terminal stretch at 1–20 (MKGFLLFISILMMIGTIVVG) is a signal peptide. The 63-residue stretch at 21–83 (KEGYAMDHEG…VWDYATNKCG (63 aa)) folds into the LCN-type CS-alpha/beta domain. Intrachain disulfides connect Cys-31–Cys-82, Cys-35–Cys-58, Cys-43–Cys-63, and Cys-47–Cys-65. Position 82 is a cysteine amide (Cys-82).

This sequence belongs to the long (4 C-C) scorpion toxin superfamily. Sodium channel inhibitor family. Beta subfamily. In terms of tissue distribution, expressed by the venom gland.

It localises to the secreted. Functionally, alpha toxins bind voltage-independently at site-3 of sodium channels (Nav) and inhibit the inactivation of the activated channels, thereby blocking neuronal transmission. This toxin acts on Nav1.2/SCN2A, Nav1.3/SCN3A, Nav1.5/SCN5A, Nav1.6/SCN8A and Nav1.7/SCN9A voltage-gated sodium channels, with the highest affinity for Nav1.3/SCN3A, followed by Nav1.6/SCN8A and Nav1.7/SCN9A which are affected almost equally. Interestingly, shows a significant shift of the voltage dependence of activation for Nav1.3/SCN3A that is characteristic of beta-toxins. In addition, in presence of LPS, this toxin inhibits the release of NO, IL-6 and TNF-alpha in J774.1 cells. Further, in the absence of LPS, it stimulates the production of the anti-inflammatory cytokine IL-10. This toxin is active on mammals. This is Alpha-mammal toxin Ts2 from Tityus serrulatus (Brazilian scorpion).